Consider the following 494-residue polypeptide: Tyrosinase (494 aa).

Residues H38, H53, C64, H224, H228, and H256 each contribute to the Cu cation site.

Belongs to the tyrosinase family. The cofactor is Cu(2+).

It catalyses the reaction 2 L-dopa + O2 = 2 L-dopaquinone + 2 H2O. The catalysed reaction is L-tyrosine + O2 = L-dopaquinone + H2O. This is Tyrosinase (mepA) from Rhizobium meliloti (Ensifer meliloti).